Here is a 147-residue protein sequence, read N- to C-terminus: Hemoglobin subunit beta-H1 (147 aa).

The region spanning 3–147 (HFTAEEKAAI…VANALSHKYH (145 aa)) is the Globin domain. 2 residues coordinate heme b: histidine 64 and histidine 93.

This sequence belongs to the globin family. Heterotetramer of two alpha chains and two beta chains. In terms of tissue distribution, red blood cells.

Its function is as follows. This is an embryonic beta-type chain. The sequence is that of Hemoglobin subunit beta-H1 (Hbb-bh1) from Mus musculus (Mouse).